The following is a 171-amino-acid chain: Disulfide bond formation protein B (171 aa).

Residues 1–8 (MRLSYRLV) lie on the Cytoplasmic side of the membrane. The helical transmembrane segment at 9–25 (SGLLVLASIVGMSFALY) threads the bilayer. The Periplasmic segment spans residues 26-43 (LEHVKGLEPCPLCIFQRV). Residues cysteine 35 and cysteine 38 are joined by a disulfide bond. The chain crosses the membrane as a helical span at residues 44 to 60 (GLMAMGFVALIAFLHNP). Residues 61–67 (VSNAIKR) are Cytoplasmic-facing. A helical membrane pass occupies residues 68–85 (FYAFLAGVAILWSVGVAG). At 86-142 (RHVWLQHLPPDQVPSCGPGLNYLIDALPMKTVLQEVLSGSGECAAIDWTFLGQSLPV) the chain is on the periplasmic side. Cysteines 101 and 128 form a disulfide. A helical transmembrane segment spans residues 143-161 (WSLAYFLLLLLVCLWQLFR). Residues 162–171 (FYPVFKTAKK) lie on the Cytoplasmic side of the membrane.

It belongs to the DsbB family.

It localises to the cell inner membrane. Required for disulfide bond formation in some periplasmic proteins. Acts by oxidizing the DsbA protein. This is Disulfide bond formation protein B from Acinetobacter baumannii (strain ATCC 17978 / DSM 105126 / CIP 53.77 / LMG 1025 / NCDC KC755 / 5377).